Here is a 167-residue protein sequence, read N- to C-terminus: Xanthine-guanine phosphoribosyltransferase (167 aa).

5-phospho-alpha-D-ribose 1-diphosphate is bound by residues 47–48 (RG), Q79, and 102–110 (DDLVDSGKT). Q79 provides a ligand contact to GMP. D103 is a Mg(2+) binding site. D106 and I149 together coordinate guanine. Xanthine-binding residues include D106 and I149. Residues 106–110 (DSGKT) and 148–149 (WI) contribute to the GMP site.

It belongs to the purine/pyrimidine phosphoribosyltransferase family. XGPT subfamily. As to quaternary structure, homotetramer. Mg(2+) serves as cofactor.

It localises to the cell inner membrane. The catalysed reaction is GMP + diphosphate = guanine + 5-phospho-alpha-D-ribose 1-diphosphate. The enzyme catalyses XMP + diphosphate = xanthine + 5-phospho-alpha-D-ribose 1-diphosphate. It carries out the reaction IMP + diphosphate = hypoxanthine + 5-phospho-alpha-D-ribose 1-diphosphate. It participates in purine metabolism; GMP biosynthesis via salvage pathway; GMP from guanine: step 1/1. The protein operates within purine metabolism; XMP biosynthesis via salvage pathway; XMP from xanthine: step 1/1. In terms of biological role, purine salvage pathway enzyme that catalyzes the transfer of the ribosyl-5-phosphate group from 5-phospho-alpha-D-ribose 1-diphosphate (PRPP) to the N9 position of the 6-oxopurines guanine and xanthine to form the corresponding ribonucleotides GMP (guanosine 5'-monophosphate) and XMP (xanthosine 5'-monophosphate), with the release of PPi. To a lesser extent, also acts on hypoxanthine. This is Xanthine-guanine phosphoribosyltransferase from Cereibacter sphaeroides (strain ATCC 17029 / ATH 2.4.9) (Rhodobacter sphaeroides).